The sequence spans 344 residues: UPF0283 membrane protein YcjF (344 aa).

A run of 3 helical transmembrane segments spans residues 70 to 90 (MVMG…VQWT), 100 to 120 (VALG…GSVV), and 213 to 233 (ESTL…FIAW).

The protein belongs to the UPF0283 family.

The protein resides in the cell inner membrane. This chain is UPF0283 membrane protein YcjF, found in Shigella dysenteriae serotype 1 (strain Sd197).